The sequence spans 287 residues: Shikimate dehydrogenase (NADP(+)) (287 aa).

Shikimate is bound by residues S18–S20 and T66. The active-site Proton acceptor is K70. Residue E82 participates in NADP(+) binding. Shikimate contacts are provided by N91 and D106. NADP(+) contacts are provided by residues G130–A134 and M228. Y230 serves as a coordination point for shikimate. G251 lines the NADP(+) pocket.

It belongs to the shikimate dehydrogenase family. In terms of assembly, homodimer.

It carries out the reaction shikimate + NADP(+) = 3-dehydroshikimate + NADPH + H(+). It participates in metabolic intermediate biosynthesis; chorismate biosynthesis; chorismate from D-erythrose 4-phosphate and phosphoenolpyruvate: step 4/7. Functionally, involved in the biosynthesis of the chorismate, which leads to the biosynthesis of aromatic amino acids. Catalyzes the reversible NADPH linked reduction of 3-dehydroshikimate (DHSA) to yield shikimate (SA). The sequence is that of Shikimate dehydrogenase (NADP(+)) from Chlorobium chlorochromatii (strain CaD3).